We begin with the raw amino-acid sequence, 287 residues long: MTPSNTLQKLRKYLEGRTGKAIIDYNMIEDGDTVLVCVSGGKDSYTLLAMLMALQQRAPVKFRLIAMNLDQKQPGFPADILPRYFESIGIEYRIVEADTYSVVKEKIPEGKTTCSLCSRLRRGIIYRTAKELGANKIALGHHRDDMVHTLFLNLLFGGKLKAMPPKLVTDDKSHVVIRPLAYCAEADIAKFARGMEFPIIPCNLCGSQDNLQRQKIREMMQEWDKRYPGRTESVFTAMQNVVPSHLADADLFDFRGLTLDTPVDEGDIAFDAPEMPISGMIPISQTA.

The PP-loop motif signature appears at 39–44; it reads SGGKDS. [4Fe-4S] cluster-binding residues include Cys-114, Cys-117, and Cys-205.

This sequence belongs to the TtcA family. In terms of assembly, homodimer. Requires Mg(2+) as cofactor. [4Fe-4S] cluster is required as a cofactor.

The protein localises to the cytoplasm. The catalysed reaction is cytidine(32) in tRNA + S-sulfanyl-L-cysteinyl-[cysteine desulfurase] + AH2 + ATP = 2-thiocytidine(32) in tRNA + L-cysteinyl-[cysteine desulfurase] + A + AMP + diphosphate + H(+). It functions in the pathway tRNA modification. Functionally, catalyzes the ATP-dependent 2-thiolation of cytidine in position 32 of tRNA, to form 2-thiocytidine (s(2)C32). The sulfur atoms are provided by the cysteine/cysteine desulfurase (IscS) system. This Dechloromonas aromatica (strain RCB) protein is tRNA-cytidine(32) 2-sulfurtransferase.